Consider the following 397-residue polypeptide: MNCISDFFTYETTKSVVVKSWTIGIINRAVQLLIISYFVGWVFLHEKAYQVRDTAIESSVVTKVKGFGRYANRVMDVSDYVTPPQGTSVFVIITKMIVTENQMQGFCPENEEKYRCVSDSQCGPERFPGGGILTGRCVNYSSVRRTCEIQGWCPTEVDTVEMPIMMEAENFTIFIKNSIRFPLFNFEKGNLLPNLTDKDIKKCRFHPEKAPFCPILRVGDVVKFAGQDFAKLARTGGVLGIKIGWVCDLDKAWDQCIPKYSFTRLDGVSEKSSVSPGYNFRFAKYYKMENGSEYRTLLKAFGIRFDVLVYGNAGKFNIIPTIISSVAAFTSVGVGTVLCDIILLNFLKGADHYKARKFEEVTETTLKGTASTNPVFTSDQATVEKQSTDSGAYSIGH.

Residues 1–20 (MNCISDFFTYETTKSVVVKS) are Cytoplasmic-facing. Residues 21-43 (WTIGIINRAVQLLIISYFVGWVF) traverse the membrane as a helical segment. Residues 44-322 (LHEKAYQVRD…AGKFNIIPTI (279 aa)) lie on the Extracellular side of the membrane. Positions 63 and 65 each coordinate ATP. Disulfide bonds link Cys-107-Cys-153, Cys-116-Cys-137, and Cys-122-Cys-147. Glu-111 is a binding site for Mg(2+). N-linked (GlcNAc...) asparagine glycosylation is present at Asn-139. A Mg(2+)-binding site is contributed by Asp-158. Residue Asp-158 coordinates Ca(2+). Residue Asn-170 is glycosylated (N-linked (GlcNAc...) asparagine). Thr-172 serves as a coordination point for ATP. A glycan (N-linked (GlcNAc...) asparagine) is linked at Asn-194. 2 disulfide bridges follow: Cys-203-Cys-213 and Cys-247-Cys-256. Residues Ser-275, Asn-279, and Arg-281 each coordinate ATP. A glycan (N-linked (GlcNAc...) asparagine) is linked at Asn-290. Lys-299 lines the ATP pocket. Residues 323 to 341 (ISSVAAFTSVGVGTVLCDI) form a helical membrane-spanning segment. Residues 342–397 (ILLNFLKGADHYKARKFEEVTETTLKGTASTNPVFTSDQATVEKQSTDSGAYSIGH) are Cytoplasmic-facing.

Belongs to the P2X receptor family. In terms of assembly, homotrimer. Forms heterotrimer with P2RX2. Heterotrimeric P2RX2/3 has a ligand dose-response profile that is distinct from either homotrimeric P2RX2 or P2RX3.

The protein resides in the cell membrane. It catalyses the reaction Ca(2+)(in) = Ca(2+)(out). The enzyme catalyses Na(+)(in) = Na(+)(out). With respect to regulation, has high sensitivity to ATP. Fast activation by external ATP. Exhibits rapid desensitization. Sensitives to the ATP agonist:alpha/beta-methylene-ATP. Subject to allosteric inhibition by AF-219. Mg(2+) and Ca(2+) slow deactivation of P2RX3. Extracellular ATP-activated non-selective cation channel. Plays particularly important role in sensory neurons where its activation is critical for gustatory, nociceptive responses, visceral reflexes and sensory hypersensitization. This chain is P2X purinoceptor 3 (P2rx3), found in Mus musculus (Mouse).